Here is a 529-residue protein sequence, read N- to C-terminus: Cytokinin dehydrogenase 4 (529 aa).

The N-terminal stretch at 1–27 (MRGAMKPSIVHCLKLLMLLALGGVTMH) is a signal peptide. The FAD-binding PCMH-type domain maps to 63–244 (CSLLPAAVLH…TRARIALEPA (182 aa)). The FAD site is built by A99, G101, and G103. H104 is modified (pros-8alpha-FAD histidine). 7 residues coordinate FAD: S105, Q109, D168, T173, S179, V183, and I234. 3 N-linked (GlcNAc...) asparagine glycosylation sites follow: N285, N419, and N425. FAD contacts are provided by Y479 and Q517.

It belongs to the oxygen-dependent FAD-linked oxidoreductase family. As to quaternary structure, monomer. FAD is required as a cofactor. Expressed in inflorescence meristems.

The protein localises to the secreted. The protein resides in the extracellular space. It catalyses the reaction N(6)-dimethylallyladenine + A + H2O = 3-methyl-2-butenal + adenine + AH2. Its function is as follows. Catalyzes the oxidation of cytokinins, a family of N(6)-substituted adenine derivatives that are plant hormones, where the substituent is an isopentenyl group. In Oryza sativa subsp. japonica (Rice), this protein is Cytokinin dehydrogenase 4 (CKX4).